The following is a 101-amino-acid chain: Small ribosomal subunit protein uS17 (101 aa).

This sequence belongs to the universal ribosomal protein uS17 family. As to quaternary structure, part of the 30S ribosomal subunit.

Functionally, one of the primary rRNA binding proteins, it binds specifically to the 5'-end of 16S ribosomal RNA. In Koribacter versatilis (strain Ellin345), this protein is Small ribosomal subunit protein uS17.